Reading from the N-terminus, the 161-residue chain is Urease accessory protein UreE (161 aa).

This sequence belongs to the UreE family. In terms of assembly, homodimer.

It is found in the cytoplasm. Functionally, involved in urease metallocenter assembly. Binds nickel. Probably functions as a nickel donor during metallocenter assembly. It is not essential for urease activity. In Proteus mirabilis (strain HI4320), this protein is Urease accessory protein UreE.